The following is a 553-amino-acid chain: MSTARLQQQFIRLWQRFSGLPTETTLQELAEVLCCSRRHVRSLLGSMQQEGWLSWQAEAGRGKRSQLTFLYSGLALQQQRAEELLEQEGIDQLVQLVGDKKAVRQMLLSQLGRSFRQGKHILRVLYYRPLQNLLPGTALRRSETHMVRQIFNGLTRINEENGELEPDLSHHWQAISPLHWRFYLRPAIHFHHGRELEMNDVITSLTRLIPQPLFSHITAVRSPTPYVIDVHLSAPDNWLPWLLGSVHAMILPQEWENQPDFRRHPIGTGPYSVIRNHQSQLKIQAFDNYFGFRALIDEVNIWVLPELSEELVYSGVQLQADDTSKNELESRLEEGCYFLLFDQRSPLTRNPDIRRWLCELITPVALLSHADPFYQRYWSPAYGMLPRWHHNRLRVLETKPEGLTELTLTFYSHHSEFDAISQTLTKLLADQGVNLKIHVVDYTQWYQGDAQSDMWLGSANFYLPLEFSLFATLYELPLLQYCLDEELHQDVELWRNNTLQMADWSQRLVSQNQFHPLFHHWLELYGQHSMRGVRMNTLGWFDFKSAWFTPPET.

The HTH marR-type domain maps to 1-117 (MSTARLQQQF…LSQLGRSFRQ (117 aa)). The H-T-H motif DNA-binding region spans 26-49 (LQELAEVLCCSRRHVRSLLGSMQQ). A solute-binding region spans residues 163-494 (ELEPDLSHHW…EELHQDVELW (332 aa)).

Its function is as follows. Activates the small RNA gene sgrS under glucose-phosphate stress conditions as well as yfdZ. Represses its own transcription under both stress and non-stress conditions. Might act as a sensor of the intracellular accumulation of phosphoglucose by binding these molecules in its C-terminal solute-binding domain. The polypeptide is HTH-type transcriptional regulator SgrR (Yersinia enterocolitica serotype O:8 / biotype 1B (strain NCTC 13174 / 8081)).